Here is a 335-residue protein sequence, read N- to C-terminus: Tetraacyldisaccharide 4'-kinase (335 aa).

58–65 provides a ligand contact to ATP; it reads TVGGSGKT.

This sequence belongs to the LpxK family.

It carries out the reaction a lipid A disaccharide + ATP = a lipid IVA + ADP + H(+). The protein operates within glycolipid biosynthesis; lipid IV(A) biosynthesis; lipid IV(A) from (3R)-3-hydroxytetradecanoyl-[acyl-carrier-protein] and UDP-N-acetyl-alpha-D-glucosamine: step 6/6. Transfers the gamma-phosphate of ATP to the 4'-position of a tetraacyldisaccharide 1-phosphate intermediate (termed DS-1-P) to form tetraacyldisaccharide 1,4'-bis-phosphate (lipid IVA). The protein is Tetraacyldisaccharide 4'-kinase of Shewanella sp. (strain ANA-3).